A 359-amino-acid chain; its full sequence is tRNA-specific 2-thiouridylase MnmA (359 aa).

Residues 6 to 13 (AMSGGVDS) and Leu32 each bind ATP. Residue Cys97 is the Nucleophile of the active site. Cys97 and Cys195 are joined by a disulfide. Gly121 serves as a coordination point for ATP. The tract at residues 144-146 (KDQ) is interaction with tRNA. Cys195 serves as the catalytic Cysteine persulfide intermediate.

This sequence belongs to the MnmA/TRMU family.

The protein localises to the cytoplasm. It catalyses the reaction S-sulfanyl-L-cysteinyl-[protein] + uridine(34) in tRNA + AH2 + ATP = 2-thiouridine(34) in tRNA + L-cysteinyl-[protein] + A + AMP + diphosphate + H(+). Its function is as follows. Catalyzes the 2-thiolation of uridine at the wobble position (U34) of tRNA, leading to the formation of s(2)U34. This chain is tRNA-specific 2-thiouridylase MnmA, found in Tropheryma whipplei (strain Twist) (Whipple's bacillus).